Here is a 367-residue protein sequence, read N- to C-terminus: HTH-type transcriptional regulator GbdR (367 aa).

The region spanning 227-325 (QEIVALMEAN…GIPPRDERQG (99 aa)) is the HTH araC/xylS-type domain. 2 DNA-binding regions (H-T-H motif) span residues 244 to 265 (DELAVYVNVSRRQLERLFQKYL) and 292 to 315 (IIEVASVCGFVSTPHFSKCYREYF).

Specific regulator of choline metabolism, which activates transcription of at least 25 genes from 11 promoters in response to choline metabolites. Required for the induction of plcH, encoding the phospholipase C, and pchP, encoding the phosphorylcholine phosphatase, in response to glycine betaine (GB) and dimethylglycine (DMG). Also controls the expression of gbcAB and dgcAB, which are required for GB and DMG degradation, respectively, in response to both GB and DMG. The GbdR regulon also includes genes encoding sarcosine, glycine and serine catabolic enzymes, the BetX and CbcXWV quaternary amine transport proteins and the acetylcholine esterase gene, choE. Acts by binding directly to the promoter region of the genes. May play an important role during P.aeruginosa interactions with eukaryotes. This chain is HTH-type transcriptional regulator GbdR, found in Pseudomonas aeruginosa (strain UCBPP-PA14).